The following is a 184-amino-acid chain: Photosystem I assembly protein Ycf4 (184 aa).

Transmembrane regions (helical) follow at residues 19–39 and 57–77; these read ISNFCWALILFLGSLGFLLVG and IIFFPQGIVMSFYGIAGLFIS.

The protein belongs to the Ycf4 family.

The protein localises to the plastid. It localises to the chloroplast thylakoid membrane. Seems to be required for the assembly of the photosystem I complex. This is Photosystem I assembly protein Ycf4 from Solanum bulbocastanum (Wild potato).